The chain runs to 179 residues: MVKLVVGIGNPGRQYVWTRHNIGFLLLDSLASRFLGAFREAPRLYASFAKVEISSEAVVLMKPTTYVNLTGKAVLAAKKFFDVSMEDILVVADDINREFGFVRFRQDCGSGGHNGIKNTTQILQSNHYWQLRLGVGRPSYPGAEGVADYVLSSFSLNEKEKLNDFLEKGIEEILPWLGC.

Tyr-15 provides a ligand contact to tRNA. Residue His-20 is the Proton acceptor of the active site. TRNA-binding residues include Tyr-66, Asn-68, and Asn-114.

It belongs to the PTH family. As to quaternary structure, monomer.

It localises to the cytoplasm. The catalysed reaction is an N-acyl-L-alpha-aminoacyl-tRNA + H2O = an N-acyl-L-amino acid + a tRNA + H(+). Functionally, hydrolyzes ribosome-free peptidyl-tRNAs (with 1 or more amino acids incorporated), which drop off the ribosome during protein synthesis, or as a result of ribosome stalling. In terms of biological role, catalyzes the release of premature peptidyl moieties from peptidyl-tRNA molecules trapped in stalled 50S ribosomal subunits, and thus maintains levels of free tRNAs and 50S ribosomes. This is Peptidyl-tRNA hydrolase from Chlamydia trachomatis serovar L2 (strain ATCC VR-902B / DSM 19102 / 434/Bu).